A 279-amino-acid polypeptide reads, in one-letter code: Pantothenate synthetase (279 aa).

31-38 (MGNLHGGH) lines the ATP pocket. Histidine 38 (proton donor) is an active-site residue. (R)-pantoate is bound at residue glutamine 62. Glutamine 62 contacts beta-alanine. 150–153 (GRKD) is an ATP binding site. Position 156 (glutamine 156) interacts with (R)-pantoate. ATP is bound by residues valine 179 and 187-190 (KSSR).

It belongs to the pantothenate synthetase family. In terms of assembly, homodimer.

The protein localises to the cytoplasm. It catalyses the reaction (R)-pantoate + beta-alanine + ATP = (R)-pantothenate + AMP + diphosphate + H(+). The protein operates within cofactor biosynthesis; (R)-pantothenate biosynthesis; (R)-pantothenate from (R)-pantoate and beta-alanine: step 1/1. Its function is as follows. Catalyzes the condensation of pantoate with beta-alanine in an ATP-dependent reaction via a pantoyl-adenylate intermediate. The chain is Pantothenate synthetase from Stenotrophomonas maltophilia (strain R551-3).